A 588-amino-acid chain; its full sequence is Putative pentatricopeptide repeat-containing protein At5g52630 (588 aa).

11 PPR repeats span residues N14 to L48, I49 to K79, S80 to P114, D115 to A149, D150 to R180, N181 to V215, N216 to S250, S251 to K281, N282 to P316, N317 to P351, and T352 to S386. Residues V387–R462 are type E motif. Positions N463 to E493 are type E(+) motif. Residues K494 to W588 form a type DYW motif region.

It belongs to the PPR family. PCMP-H subfamily.

The polypeptide is Putative pentatricopeptide repeat-containing protein At5g52630 (PCMP-H52) (Arabidopsis thaliana (Mouse-ear cress)).